The following is a 227-amino-acid chain: Glutathione S-transferase U27 (227 aa).

Residues 4–84 (EEVVVLNFWP…YIDEVWKDDK (81 aa)) form the GST N-terminal domain. Glutathione-binding positions include 14-15 (SM), 41-42 (QK), 55-56 (KI), and 68-69 (ES). The GST C-terminal domain maps to 92 to 217 (DPYQKSQCRF…LKIFDRVTQI (126 aa)).

The protein belongs to the GST superfamily. Tau family.

The protein resides in the cytoplasm. It localises to the cytosol. It carries out the reaction RX + glutathione = an S-substituted glutathione + a halide anion + H(+). Functionally, may be involved in the conjugation of reduced glutathione to a wide number of exogenous and endogenous hydrophobic electrophiles and have a detoxification role against certain herbicides. The protein is Glutathione S-transferase U27 (GSTU27) of Arabidopsis thaliana (Mouse-ear cress).